The following is a 109-amino-acid chain: uncharacterized protein (109 aa).

Positions 1 to 21 (MEKSICTSVLVLGLFISSAIG) are cleaved as a signal peptide.

In terms of tissue distribution, prismatic layer of shell (at protein level). Expressed primarily in the mantle with highest level in the mantle edge and lower level in the mantle pallium.

It is found in the secreted. This is an uncharacterized protein from Margaritifera margaritifera (Freshwater pearl mussel).